Consider the following 156-residue polypeptide: Ribosome maturation factor RimP (156 aa).

It belongs to the RimP family.

The protein resides in the cytoplasm. Required for maturation of 30S ribosomal subunits. This Bacillus cytotoxicus (strain DSM 22905 / CIP 110041 / 391-98 / NVH 391-98) protein is Ribosome maturation factor RimP.